We begin with the raw amino-acid sequence, 427 residues long: Zinc finger protein 134 (427 aa).

A Glycyl lysine isopeptide (Lys-Gly) (interchain with G-Cter in SUMO2) cross-link involves residue lysine 20. Residues 50 to 72 (LPCDICGPILKDILHLDEHQGTH) form a C2H2-type 1 zinc finger. The C2H2-type 2; degenerate zinc-finger motif lies at 78 to 100 (HTCGACGRQFWFSANLHQYQKCY). Residues lysine 135 and lysine 139 each participate in a glycyl lysine isopeptide (Lys-Gly) (interchain with G-Cter in SUMO2) cross-link. C2H2-type zinc fingers lie at residues 176–198 (YKCS…QRIH), 204–226 (YECS…QRIH), 232–254 (YECS…KRIH), 260–282 (YKCN…QRVH), 288–310 (YKCS…ESIH), 316–338 (YDCS…QRIH), 344–366 (FECI…QRVH), 372–394 (FVCS…QRVH), and 400–422 (YECS…QKVH).

The protein belongs to the krueppel C2H2-type zinc-finger protein family.

It is found in the nucleus. May be involved in transcriptional regulation. In Homo sapiens (Human), this protein is Zinc finger protein 134 (ZNF134).